The primary structure comprises 204 residues: Guanylate kinase (204 aa).

A Guanylate kinase-like domain is found at 5–184; sequence GLLLVLSGPS…AVDHIKAIVD (180 aa). Residue 12–19 coordinates ATP; the sequence is GPSGVGKG.

Belongs to the guanylate kinase family.

Its subcellular location is the cytoplasm. It catalyses the reaction GMP + ATP = GDP + ADP. In terms of biological role, essential for recycling GMP and indirectly, cGMP. The sequence is that of Guanylate kinase from Lactobacillus acidophilus (strain ATCC 700396 / NCK56 / N2 / NCFM).